We begin with the raw amino-acid sequence, 252 residues long: NADP-dependent (R)-specific alcohol dehydrogenase (252 aa).

NADP(+) contacts are provided by residues 16–19 (TLGI), 39–40 (RH), 63–64 (DA), Asn90, Tyr156, Lys160, and 191–195 (IKTPL). Tyr156 serves as the catalytic Proton donor/acceptor. Position 252 (Gln252) interacts with Mg(2+).

Belongs to the short-chain dehydrogenases/reductases (SDR) family. As to quaternary structure, homotetramer. Mg(2+) serves as cofactor.

The catalysed reaction is a secondary alcohol + NADP(+) = a ketone + NADPH + H(+). It carries out the reaction acetophenone + NADPH + H(+) = (R)-1-phenylethanol + NADP(+). It catalyses the reaction 2,5-hexanedione + 2 NADPH + 2 H(+) = (2R,5R)-hexanediol + 2 NADP(+). The enzyme catalyses ethyl 3-oxobutanoate + NADPH + H(+) = ethyl (R)-3-hydroxybutanoate + NADP(+). The catalysed reaction is 2-octanone + NADPH + H(+) = (2R)-octan-2-ol + NADP(+). Functionally, NADP-dependent (R)-specific alcohol dehydrogenase (ADH) with a broad substrate specificity, able to catalyze in vitro the stereoselective reduction of several aliphatic and aromatic ketones as well as beta-keto esters to the corresponding enantiomerically pure alcohols. This is NADP-dependent (R)-specific alcohol dehydrogenase from Lentilactobacillus kefiri (Lactobacillus kefiri).